The primary structure comprises 230 residues: Large ribosomal subunit protein uL1 (230 aa).

It belongs to the universal ribosomal protein uL1 family. As to quaternary structure, part of the 50S ribosomal subunit.

Functionally, binds directly to 23S rRNA. The L1 stalk is quite mobile in the ribosome, and is involved in E site tRNA release. In terms of biological role, protein L1 is also a translational repressor protein, it controls the translation of the L11 operon by binding to its mRNA. The chain is Large ribosomal subunit protein uL1 from Ligilactobacillus salivarius (strain UCC118) (Lactobacillus salivarius).